The chain runs to 112 residues: Ribosome-binding factor A (112 aa).

It belongs to the RbfA family. As to quaternary structure, monomer. Binds 30S ribosomal subunits, but not 50S ribosomal subunits or 70S ribosomes.

It is found in the cytoplasm. Functionally, one of several proteins that assist in the late maturation steps of the functional core of the 30S ribosomal subunit. Associates with free 30S ribosomal subunits (but not with 30S subunits that are part of 70S ribosomes or polysomes). Required for efficient processing of 16S rRNA. May interact with the 5'-terminal helix region of 16S rRNA. The polypeptide is Ribosome-binding factor A (Mycoplasma genitalium (strain ATCC 33530 / DSM 19775 / NCTC 10195 / G37) (Mycoplasmoides genitalium)).